We begin with the raw amino-acid sequence, 714 residues long: Pre-mRNA-splicing factor CLF1 (714 aa).

12 HAT repeats span residues S48–K80, H83–S115, K117–T149, K151–R182, D184–N215, K265–S305, S315–Q347, D349–K384, G394–R430, N435–K470, G472–N510, and M555–S586.

The protein belongs to the crooked-neck family. In terms of assembly, associated with the spliceosome.

The protein localises to the nucleus. Involved in pre-mRNA splicing and cell cycle progression. Required for the spliceosome assembly and initiation of the DNA replication. This Debaryomyces hansenii (strain ATCC 36239 / CBS 767 / BCRC 21394 / JCM 1990 / NBRC 0083 / IGC 2968) (Yeast) protein is Pre-mRNA-splicing factor CLF1 (CLF1).